The primary structure comprises 367 residues: tRNA/tmRNA (uracil-C(5))-methyltransferase (367 aa).

Glutamine 190, tyrosine 218, asparagine 223, glutamate 239, and aspartate 299 together coordinate S-adenosyl-L-methionine. Cysteine 324 serves as the catalytic Nucleophile. Catalysis depends on glutamate 358, which acts as the Proton acceptor.

This sequence belongs to the class I-like SAM-binding methyltransferase superfamily. RNA M5U methyltransferase family. TrmA subfamily.

The catalysed reaction is uridine(54) in tRNA + S-adenosyl-L-methionine = 5-methyluridine(54) in tRNA + S-adenosyl-L-homocysteine + H(+). It carries out the reaction uridine(341) in tmRNA + S-adenosyl-L-methionine = 5-methyluridine(341) in tmRNA + S-adenosyl-L-homocysteine + H(+). Functionally, dual-specificity methyltransferase that catalyzes the formation of 5-methyluridine at position 54 (m5U54) in all tRNAs, and that of position 341 (m5U341) in tmRNA (transfer-mRNA). This Yersinia pestis bv. Antiqua (strain Antiqua) protein is tRNA/tmRNA (uracil-C(5))-methyltransferase.